Reading from the N-terminus, the 545-residue chain is External NADH-ubiquinone oxidoreductase 2, mitochondrial (545 aa).

The transit peptide at 1–21 (MLPRLGFARTARSIHRFKMTQ) directs the protein to the mitochondrion. 99–129 (ELVILGTGWGAISLLKKLDTSLYNVTVVSPR) is an FAD binding site. An NAD(+)-binding site is contributed by 260-296 (LTFVVVGGGPTGVEFAAELQDYINQDLRKWMPDLSKE).

This sequence belongs to the NADH dehydrogenase family.

Its subcellular location is the mitochondrion intermembrane space. The enzyme catalyses a quinone + NADH + H(+) = a quinol + NAD(+). It carries out the reaction a ubiquinone + NADH + H(+) = a ubiquinol + NAD(+). Functionally, external NADH dehydrogenase required for optimum cellular growth with a number of nonfermentable carbon sources, including ethanol. With NDE1, performes the mitochondrial oxidation of cytosolic NADH under these growth conditions. Regulates the mitochondrial glycerol-3-phosphate dehydrogenase, GUT2, also involved in cytosolic NADH oxidation. In Saccharomyces cerevisiae (strain ATCC 204508 / S288c) (Baker's yeast), this protein is External NADH-ubiquinone oxidoreductase 2, mitochondrial (NDE2).